A 419-amino-acid polypeptide reads, in one-letter code: Probable pectate lyase C (419 aa).

Positions 1-19 (MRLTPSLISCLSLLHFTSA) are cleaved as a signal peptide. Asparagine 48, asparagine 164, and asparagine 201 each carry an N-linked (GlcNAc...) asparagine glycan. Arginine 204 is an active-site residue. Residues 261 to 296 (NENFHAYVETNYYDSDKDGTLNGSELGVDSTNYGGM) enclose the EF-hand domain. The Ca(2+) site is built by aspartate 274, aspartate 276, aspartate 278, and threonine 280. Asparagine 282 is a glycosylation site (N-linked (GlcNAc...) asparagine). Glutamate 285 serves as a coordination point for Ca(2+). Residues 350-395 (ALISDEADMGGAGDLDQGTTPTDTDGDGIPDDAEAELGTDPNTADS) are disordered. Residues 363–372 (DLDQGTTPTD) show a composition bias toward low complexity. Over residues 373–386 (TDGDGIPDDAEAEL) the composition is skewed to acidic residues.

It belongs to the polysaccharide lyase 1 family. Ca(2+) serves as cofactor.

It localises to the secreted. It carries out the reaction Eliminative cleavage of (1-&gt;4)-alpha-D-galacturonan to give oligosaccharides with 4-deoxy-alpha-D-galact-4-enuronosyl groups at their non-reducing ends.. In terms of biological role, pectinolytic enzyme consist of four classes of enzymes: pectin lyase, polygalacturonase, pectin methylesterase and rhamnogalacturonase. Among pectinolytic enzymes, pectin lyase is the most important in depolymerization of pectin, since it cleaves internal glycosidic bonds of highly methylated pectins. Favors pectate, the anion, over pectin, the methyl ester. The polypeptide is Probable pectate lyase C (plyC) (Aspergillus flavus (strain ATCC 200026 / FGSC A1120 / IAM 13836 / NRRL 3357 / JCM 12722 / SRRC 167)).